A 464-amino-acid chain; its full sequence is UDP-glycosyltransferase 76F2 (464 aa).

UDP-alpha-D-glucose is bound by residues S279, 338–340, 355–363, and 377–380; these read VNQ, HCGWNSTIE, and FSDQ.

This sequence belongs to the UDP-glycosyltransferase family.

This chain is UDP-glycosyltransferase 76F2 (UGT76F2), found in Arabidopsis thaliana (Mouse-ear cress).